A 241-amino-acid polypeptide reads, in one-letter code: MTGKPLVAILSGAGVSTDSGIPDYRGPNGLWRRDPEAEKLVTYEYYMGDPEIRRRSWLMRRDSAALHAEPNAAHRAVADLERRGVPVRVLTQNVDGLHQLAGVSARKVLELHGTARDCVCTGCGARGPMADVLARIEAGEDDPPCLDCGGVLKTATVMFGERLDPVVLGEAAAISKACQVFVAVGTSLQVEPAAGLARVAVEHGARLVVVNAEPTPYDELADEVIREPIGSALPALLRGLG.

The 241-residue stretch at Met-1 to Gly-241 folds into the Deacetylase sirtuin-type domain. NAD(+)-binding residues include Ala-13, Thr-17, Arg-25, Gln-92, Val-94, Asp-95, and His-112. Residues Val-94 and Asp-95 each contribute to the nicotinamide site. His-112 acts as the Proton acceptor in catalysis. The Zn(2+) site is built by Cys-120, Cys-123, Cys-145, and Cys-148. 4 residues coordinate NAD(+): Thr-186, Ser-187, Asn-211, and Ile-229.

Belongs to the sirtuin family. Class U subfamily. Requires Zn(2+) as cofactor.

The protein localises to the cytoplasm. It carries out the reaction N(6)-acetyl-L-lysyl-[protein] + NAD(+) + H2O = 2''-O-acetyl-ADP-D-ribose + nicotinamide + L-lysyl-[protein]. Its function is as follows. NAD-dependent protein deacetylase which modulates the activities of several enzymes which are inactive in their acetylated form. In Streptomyces coelicolor (strain ATCC BAA-471 / A3(2) / M145), this protein is NAD-dependent protein deacetylase 2.